Here is a 435-residue protein sequence, read N- to C-terminus: Serine/threonine-protein kinase 40 (435 aa).

The region spanning 35–332 is the Protein kinase domain; it reads FILGPRLGNS…DVLEALSAII (298 aa). Residues 41–49 and Lys66 contribute to the ATP site; that span reads LGNSPVPSI. Catalysis depends on Asp197, which acts as the Proton acceptor.

This sequence belongs to the protein kinase superfamily. CAMK Ser/Thr protein kinase family.

It is found in the nucleus. It localises to the cytoplasm. It catalyses the reaction L-seryl-[protein] + ATP = O-phospho-L-seryl-[protein] + ADP + H(+). The enzyme catalyses L-threonyl-[protein] + ATP = O-phospho-L-threonyl-[protein] + ADP + H(+). In terms of biological role, may be a negative regulator of NF-kappa-B and p53-mediated gene transcription. This Rattus norvegicus (Rat) protein is Serine/threonine-protein kinase 40 (Stk40).